The primary structure comprises 799 residues: Lon protease 4 (799 aa).

One can recognise a Lon N-terminal domain in the interval 15-204 (FPLLPLRTGV…RVAGLLAEAS (190 aa)). 356-363 (GPPGVGKT) serves as a coordination point for ATP. The 182-residue stretch at 595-776 (TSVAGVATGL…SQVIAAALEE (182 aa)) folds into the Lon proteolytic domain. Active-site residues include serine 682 and lysine 725.

This sequence belongs to the peptidase S16 family. In terms of assembly, homohexamer. Organized in a ring with a central cavity.

It localises to the cytoplasm. The catalysed reaction is Hydrolysis of proteins in presence of ATP.. In terms of biological role, ATP-dependent serine protease that mediates the selective degradation of mutant and abnormal proteins as well as certain short-lived regulatory proteins. Required for cellular homeostasis and for survival from DNA damage and developmental changes induced by stress. Degrades polypeptides processively to yield small peptide fragments that are 5 to 10 amino acids long. Binds to DNA in a double-stranded, site-specific manner. This chain is Lon protease 4, found in Sorangium cellulosum (strain So ce56) (Polyangium cellulosum (strain So ce56)).